Consider the following 336-residue polypeptide: Peroxidase 11 (336 aa).

Residues 1–20 (MMRLLFVFFMVHTIFIPCFS) form the signal peptide. 4 disulfide bridges follow: Cys39–Cys119, Cys72–Cys77, Cys125–Cys331, and Cys204–Cys236. His70 serves as the catalytic Proton acceptor. Residues Asp71, Val74, Gly76, Asp78, and Ser80 each contribute to the Ca(2+) site. Pro167 serves as a coordination point for substrate. A heme b-binding site is contributed by His197. Thr198 contacts Ca(2+). Residue Asn246 is glycosylated (N-linked (GlcNAc...) asparagine). The Ca(2+) site is built by Asp251, Thr254, and Asp259.

The protein belongs to the peroxidase family. Classical plant (class III) peroxidase subfamily. The cofactor is heme b. It depends on Ca(2+) as a cofactor. In terms of tissue distribution, expressed in roots and stems.

It is found in the secreted. It carries out the reaction 2 a phenolic donor + H2O2 = 2 a phenolic radical donor + 2 H2O. Its function is as follows. Removal of H(2)O(2), oxidation of toxic reductants, biosynthesis and degradation of lignin, suberization, auxin catabolism, response to environmental stresses such as wounding, pathogen attack and oxidative stress. These functions might be dependent on each isozyme/isoform in each plant tissue. In Arabidopsis thaliana (Mouse-ear cress), this protein is Peroxidase 11 (PER11).